Consider the following 117-residue polypeptide: MKIPVPYAWTPDFKTTYENIDSEHRTLFNGLFALSEFNTQHQLNAAIEVFTLHFHDEQGQMIRSNYVNTKEHTDIHNGFMDTMRGWQSPVPQKALKDGMEWLANHIPTEDFKYKGKL.

Residues His24, His53, Glu57, His72, His76, His105, and Asp110 each coordinate Fe cation.

It belongs to the hemerythrin family. Octamer composed of two types of chains: alpha and beta.

Its function is as follows. Hemerythrin is a respiratory protein in blood cells of certain marine worms. The oxygen-binding site in each chain contains two iron atoms. The protein is Hemerythrin subunit beta of Lingula anatina (Brachiopod).